An 822-amino-acid polypeptide reads, in one-letter code: Coiled-coil domain-containing protein 175 (822 aa).

Coiled-coil stretches lie at residues 129-164 (IIEI…EVLG), 223-397 (IEKQ…KQMM), and 510-537 (HLIE…IEEL).

This chain is Coiled-coil domain-containing protein 175 (Ccdc175), found in Mus musculus (Mouse).